The following is a 254-amino-acid chain: Serotonin N-acetyltransferase 1, chloroplastic (254 aa).

The transit peptide at 1–83 (MASAASASAS…NSTETVEPPS (83 aa)) directs the protein to the chloroplast. The N-acetyltransferase domain maps to 119-254 (VNVYDLQALC…IKGMFWYPRF (136 aa)).

The protein resides in the plastid. The protein localises to the chloroplast. It is found in the nucleus. The catalysed reaction is a 2-arylethylamine + acetyl-CoA = an N-acetyl-2-arylethylamine + CoA + H(+). It participates in aromatic compound metabolism; melatonin biosynthesis; melatonin from serotonin: step 1/2. Functionally, catalyzes the N-acetylation of serotonin into N-acetylserotonin, the penultimate step in the synthesis of melatonin. Catalyzes in vitro the N-acetylation of tryptamine to produce N-acetyltryptamine, 5-methoxytryptamine to produce melatonin and tyramine to produce N-acetyltyramine. Acetyltransferase required for geminivirus infection and systemic spread. This is Serotonin N-acetyltransferase 1, chloroplastic from Oryza sativa subsp. indica (Rice).